The primary structure comprises 771 residues: Semaphorin-3A (771 aa).

The signal sequence occupies residues 1–20 (MGWLTRIVCLFWGVLLTARA). The Sema domain maps to 31–514 (RLKLSYKEML…STAGVAQLPL (484 aa)). N-linked (GlcNAc...) asparagine glycosylation is present at Asn53. Residues Cys103 and Cys114 are joined by a disulfide bond. Asn125 is a glycosylation site (N-linked (GlcNAc...) asparagine). 4 disulfide bridges follow: Cys132–Cys141, Cys269–Cys381, Cys293–Cys341, and Cys517–Cys535. The region spanning 580-664 (PEERIIYGVE…GFIQTLLKVT (85 aa)) is the Ig-like C2-type domain. Residue Asn590 is glycosylated (N-linked (GlcNAc...) asparagine). Cys649 and Cys722 are joined by a disulfide. The segment covering 728-737 (RDRKQRRQRP) has biased composition (basic residues). A disordered region spans residues 728-771 (RDRKQRRQRPGHTPGNSNKWKHLQENKKGRNRRTHEFERAPRSV). The span at 749-771 (HLQENKKGRNRRTHEFERAPRSV) shows a compositional bias: basic and acidic residues.

This sequence belongs to the semaphorin family. As to quaternary structure, interacts with PLXND1. Expressed in the dorsal root ganglia.

Its subcellular location is the secreted. Involved in the development of the olfactory system and in neuronal control of puberty. Induces the collapse and paralysis of neuronal growth cones. Could serve as a ligand that guides specific growth cones by a motility-inhibiting mechanism. Binds to the complex neuropilin-1/plexin-1. The chain is Semaphorin-3A (SEMA3A) from Homo sapiens (Human).